The sequence spans 1537 residues: MTMPHRYMFLAVFTLLALTSVASGATEACLPAGQRKSGMNINFYQYSLKDSSTYSNAAYMAYGYASKTKLGSVGGQTDISIDYNIPCVSSSGTFPCPQEDSYGNWGCKGMGACSNSQGIAYWSTDLFGFYTTPTNVTLEMTGYFLPPQTGSYTFKFATVDDSAILSVGGATAFNCCAQQQPPITSTNFTIDGIKPWGGSLPPNIEGTVYMYAGYYYPMKVVYSNAVSWGTLPISVTLPDGTTVSDDFEGYVYSFDDDLSQSNCTVPDPSNYAVSTTTTTTEPWTGTFTSTSTEMTTVTGTNGVPTDETVIVIRTPTTASTIITTTEPWNSTFTSTSTELTTVTGTNGVRTDETIIVIRTPTTATTAITTTEPWNSTFTSTSTELTTVTGTNGLPTDETIIVIRTPTTATTAMTTTQPWNDTFTSTSTELTTVTGTNGLPTDETIIVIRTPTTATTAMTTTQPWNDTFTSTSTELTTVTGTNGLPTDETIIVIRTPTTATTAMTTTQPWNDTFTSTSTEITTVTGTNGLPTDETIIVIRTPTTATTAMTTPQPWNDTFTSTSTEMTTVTGTNGLPTDETIIVIRTPTTATTAITTTEPWNSTFTSTSTEMTTVTGTNGLPTDETIIVIRTPTTATTAITTTQPWNDTFTSTSTEMTTVTGTNGLPTDETIIVIRTPTTATTAMTTTQPWNDTFTSTSTEITTVTGTTGLPTDETIIVIRTPTTATTAMTTTQPWNDTFTSTSTEMTTVTGTNGVPTDETVIVIRTPTSEGLISTTTEPWTGTFTSTSTEMTTVTGTNGQPTDETVIVIRTPTSEGLVTTTTEPWTGTFTSTSTEMTTITGTNGVPTDETVIVIRTPTSEGLISTTTEPWTGTFTSTSTEMTTITGTNGQPTDETVIVIRTPTSEGLISTTTEPWTGTFTSTSTEMTHVTGTNGVPTDETVIVIRTPTSEGLISTTTEPWTGTFTSTSTEVTTITGTNGQPTDETVIVIRTPTSEGLISTTTEPWTGTFTSTSTEMTTVTGTNGQPTDETVIVIRTPTSEGLVTTTTEPWTGTFTSTSTEMSTVTGTNGLPTDETVIVVKTPTTAISSSLSSSSSGQITSSITSSRPIITPFYPSNGTSVISSSVISSSVTSSLFTSSPVISSSVISSSTTTSTSIFSESSKSSVIPTSSSTSGSSESETSSAGSVSSSSFISSESSKSPTYSSSSLPLVTSATTSQETASSLPPATTTKTSEQTTLVTVTSCESHVCTESISPAIVSTATVTVSGVTTEYTTWCPISTTETTKQTKGTTEQTTETTKQTTVVTISSCESDVCSKTASPAIVSTSTATINGVTTEYTTWCPISTTESRQQTTLVTVTSCESGVCSETASPAIVSTATATVNDVVTVYPTWRPQTANEESVSSKMNSATGETTTNTLAAETTTNTVAAETITNTGAAETKTVVTSSLSRSNHAETQTASATDVIGHSSSVVSVSETGNTKSLTSSGLSTMSQQPRSTPASSMVGYSTASLEISTYAGSANSLLAGSGLSVFIASLLLAII.

The N-terminal stretch at 1-24 is a signal peptide; it reads MTMPHRYMFLAVFTLLALTSVASG. One can recognise a PA14 domain in the interval 74 to 249; sequence GGQTDISIDY…GTTVSDDFEG (176 aa). N-linked (GlcNAc...) asparagine glycosylation is found at Asn-135 and Asn-187. The tract at residues 197–240 is sugar recognition; the sequence is GGSLPPNIEGTVYMYAGYYYPMKVVYSNAVSWGTLPISVTLPDG. The N-linked (GlcNAc...) asparagine glycan is linked to Asn-262. A run of 18 repeats spans residues 278–322, 323–367, 368–412, 413–457, 458–502, 503–547, 548–592, 593–637, 638–682, 683–727, 728–772, 773–817, 818–862, 863–907, 908–952, 953–997, 998–1042, and 1043–1087. Residues 278–1087 are 18 X 45 AA approximate tandem repeats, Thr-rich; sequence TTTEPWTGTF…KTPTTAISSS (810 aa). N-linked (GlcNAc...) asparagine glycosylation is found at Asn-329, Asn-374, Asn-419, Asn-464, Asn-509, Asn-554, Asn-599, Asn-644, Asn-689, and Asn-734. Disordered regions lie at residues 770-799 and 860-889; these read LIST…NGQP. The segment covering 773–795 has biased composition (low complexity); that stretch reads TTTEPWTGTFTSTSTEMTTVTGT. Low complexity predominate over residues 863-885; that stretch reads TTTEPWTGTFTSTSTEMTTITGT. Positions 995-1024 are disordered; it reads LISTTTEPWTGTFTSTSTEMTTVTGTNGQP. The span at 998–1020 shows a compositional bias: low complexity; that stretch reads TTTEPWTGTFTSTSTEMTTVTGT. Asn-1114 carries an N-linked (GlcNAc...) asparagine glycan. 2 tandem repeats follow at residues 1118-1137 and 1138-1157. The 2 X 20 AA approximate tandem repeats, Ser/Thr-rich stretch occupies residues 1118–1157; it reads VISSSVISSSVTSSLFTSSPVISSSVISSSTTTSTSIFSE. The span at 1161–1220 shows a compositional bias: low complexity; that stretch reads SSVIPTSSSTSGSSESETSSAGSVSSSSFISSESSKSPTYSSSSLPLVTSATTSQETASS. The disordered stretch occupies residues 1161–1232; sequence SSVIPTSSST…PATTTKTSEQ (72 aa). Positions 1222–1232 are enriched in polar residues; it reads PPATTTKTSEQ. Repeat copies occupy residues 1226–1276, 1291–1341, 1342–1392, 1408–1416, 1417–1425, and 1426–1434. A 3 X 51 AA approximate repeats, Ser/Thr-rich region spans residues 1226–1392; the sequence is TTKTSEQTTL…TVYPTWRPQT (167 aa). The segment covering 1392–1404 has biased composition (polar residues); that stretch reads TANEESVSSKMNS. The interval 1392 to 1414 is disordered; the sequence is TANEESVSSKMNSATGETTTNTL. The span at 1405–1414 shows a compositional bias: low complexity; it reads ATGETTTNTL. Residues 1408–1434 form a 3 X 9 AA approximate tandem repeats, Thr-rich region; that stretch reads ETTTNTLAAETTTNTVAAETITNTGAA. Residues 1468–1497 form a disordered region; sequence VSVSETGNTKSLTSSGLSTMSQQPRSTPAS. The span at 1472–1497 shows a compositional bias: polar residues; that stretch reads ETGNTKSLTSSGLSTMSQQPRSTPAS. Gly-1514 is lipidated: GPI-anchor amidated glycine. Positions 1515 to 1537 are cleaved as a propeptide — removed in mature form; the sequence is SANSLLAGSGLSVFIASLLLAII.

This sequence belongs to the flocculin family. Extensively N- and O-glycosylated. In terms of processing, the GPI-anchor is attached to the protein in the endoplasmic reticulum and serves to target the protein to the cell surface. There, the glucosamine-inositol phospholipid moiety is cleaved off and the GPI-modified mannoprotein is covalently attached via its lipidless GPI glycan remnant to the 1,6-beta-glucan of the outer cell wall layer.

Its subcellular location is the cell membrane. The protein resides in the secreted. It localises to the cell wall. Its function is as follows. Cell wall protein that participates directly in adhesive cell-cell interactions during yeast flocculation, a reversible, asexual and Ca(2+)-dependent process in which cells adhere to form aggregates (flocs) consisting of thousands of cells. The lectin-like protein sticks out of the cell wall of flocculent cells and selectively binds mannose residues in the cell walls of adjacent cells. Activity is inhibited by mannose, but not by glucose, maltose, sucrose or galactose. Also involved in cell-substrate adhesion. The protein is Flocculation protein FLO1 (FLO1) of Saccharomyces cerevisiae (strain ATCC 204508 / S288c) (Baker's yeast).